A 194-amino-acid chain; its full sequence is Peptidyl-tRNA hydrolase (194 aa).

Tyr17 is a tRNA binding site. Catalysis depends on His22, which acts as the Proton acceptor. TRNA contacts are provided by Tyr68, Asn70, and Asn116.

The protein belongs to the PTH family. As to quaternary structure, monomer.

It localises to the cytoplasm. The catalysed reaction is an N-acyl-L-alpha-aminoacyl-tRNA + H2O = an N-acyl-L-amino acid + a tRNA + H(+). Functionally, hydrolyzes ribosome-free peptidyl-tRNAs (with 1 or more amino acids incorporated), which drop off the ribosome during protein synthesis, or as a result of ribosome stalling. Catalyzes the release of premature peptidyl moieties from peptidyl-tRNA molecules trapped in stalled 50S ribosomal subunits, and thus maintains levels of free tRNAs and 50S ribosomes. This chain is Peptidyl-tRNA hydrolase, found in Pseudomonas syringae pv. tomato (strain ATCC BAA-871 / DC3000).